We begin with the raw amino-acid sequence, 132 residues long: Putative RNase AF_2433 (132 aa).

Catalysis depends on residues Arg-90 and His-95. The RX(4)HXY motif signature appears at 90-97 (RNWLVHRY). Tyr-97 is subject to O-di-AMP-tyrosine.

Belongs to the HepT RNase toxin family. In terms of assembly, homodimer, probably forms a complex with cognate antitoxin AF_2432. Modified by cognate antitoxin AF_2432; probably at least 2 successive AMPylation events occur on Tyr-97.

Probable toxic component of a putative type VII toxin-antitoxin (TA) system, probably an RNase. Probably neutralized by cognate antitoxin AF_2432. Neutralization may be due to AMPylation by AF_2432. In Archaeoglobus fulgidus (strain ATCC 49558 / DSM 4304 / JCM 9628 / NBRC 100126 / VC-16), this protein is Putative RNase AF_2433.